The primary structure comprises 491 residues: Glutamyl-tRNA(Gln) amidotransferase subunit A (491 aa).

Active-site charge relay system residues include K77 and S152. The Acyl-ester intermediate role is filled by S176.

Belongs to the amidase family. GatA subfamily. In terms of assembly, heterotrimer of A, B and C subunits.

It catalyses the reaction L-glutamyl-tRNA(Gln) + L-glutamine + ATP + H2O = L-glutaminyl-tRNA(Gln) + L-glutamate + ADP + phosphate + H(+). Allows the formation of correctly charged Gln-tRNA(Gln) through the transamidation of misacylated Glu-tRNA(Gln) in organisms which lack glutaminyl-tRNA synthetase. The reaction takes place in the presence of glutamine and ATP through an activated gamma-phospho-Glu-tRNA(Gln). The sequence is that of Glutamyl-tRNA(Gln) amidotransferase subunit A from Chlamydia abortus (strain DSM 27085 / S26/3) (Chlamydophila abortus).